A 186-amino-acid chain; its full sequence is Ribosome-recycling factor (186 aa).

The protein belongs to the RRF family.

Its subcellular location is the cytoplasm. In terms of biological role, responsible for the release of ribosomes from messenger RNA at the termination of protein biosynthesis. May increase the efficiency of translation by recycling ribosomes from one round of translation to another. The sequence is that of Ribosome-recycling factor from Ralstonia nicotianae (strain ATCC BAA-1114 / GMI1000) (Ralstonia solanacearum).